Consider the following 153-residue polypeptide: Regulatory protein RecX (153 aa).

Belongs to the RecX family.

It localises to the cytoplasm. Its function is as follows. Modulates RecA activity. The protein is Regulatory protein RecX of Vibrio vulnificus (strain CMCP6).